A 315-amino-acid polypeptide reads, in one-letter code: Secreted mono- and diacylglycerol lipase LIP2 (315 aa).

The first 21 residues, 1–21 (MACFRVILYLSVIFFVQCVFA), serve as a signal peptide directing secretion. Residues C68 and C308 are joined by a disulfide bond. An N-linked (GlcNAc...) asparagine glycan is attached at N74. Residue S182 is the Nucleophile of the active site. Residue D240 is part of the active site. An N-linked (GlcNAc...) asparagine glycan is attached at N265. H292 is an active-site residue.

It belongs to the AB hydrolase superfamily. Lipase family. Class 3 subfamily.

It localises to the secreted. It carries out the reaction a monoacylglycerol + H2O = glycerol + a fatty acid + H(+). It catalyses the reaction a diacylglycerol + H2O = a monoacylglycerol + a fatty acid + H(+). Functionally, secreted lipase involved in Dandruff and seborrheic dermatitis (D/SD) probably via lipase-mediated breakdown of sebaceous lipids and release of irritating free fatty acids. Shows activity against monoglyceride and diglyceride substrates and generates free oleic acid from the substrates mono- and diolein. Able to cleave the oleic acid from both the 1 and the 2 position of the glycerol backbone as 1,2 isomers of diolein were converted into oleic acid and glycerol. Due to an absence of fatty acid synthase genes in Malassezia species, secretory lipases are essential for the yeast to generate free fatty acids from degradation of sebum and assimilate them as lipid sources for growth. Plays an essential role at the pathogen-host interface during disease progression. Also performs the reverse reaction to build diacylglycerols from monoacylglycerols. In Malassezia restricta (Seborrheic dermatitis infection agent), this protein is Secreted mono- and diacylglycerol lipase LIP2.